We begin with the raw amino-acid sequence, 519 residues long: MSDLFEDPAPARNTPEYTVSELSGAVKRVIEGEFGLVRVRGEIGRVSRPASGHLYFDLKDDRAVIAAICWKGQAGRLSVRPEEGMEVVATGRMTTFPGQSKYQIIVEDMAPAGAGALMAMLEKRRAALAAEGLFDAARKRPLPFLPRVIGVVTSPSGAVIRDILHRLRDRFPSHVLIWPVAVQGEKCAPEVAAAIRGFNALPDGGPIPRPDLLIVARGGGSLEDLWGFNEEIVVRAAAESRIPLISAVGHETDTTLIDHAADRRAPTPTAAAEMAVPVRLDLLAGLDGQGARLSRCAAETIRRRDQRLRDLSRALPRLDSLVAGPSQRFDLWSARLSGALGQSVAARRARLEPLGAHLRPRLLADLVARQKDRLADRGRGLETCLGRRSERARDRFEALSGRLAPAFARLVAESERTNRRDAAALGALAARLEAAPEARLLRLADRLEALDRLRQTLGYRETLRRGYAVVRADGEVVTTKTAAERAASLEIEFQDGRLTLGARKPRKGKAEPPAQGSLL.

The protein belongs to the XseA family. As to quaternary structure, heterooligomer composed of large and small subunits.

The protein resides in the cytoplasm. The enzyme catalyses Exonucleolytic cleavage in either 5'- to 3'- or 3'- to 5'-direction to yield nucleoside 5'-phosphates.. Bidirectionally degrades single-stranded DNA into large acid-insoluble oligonucleotides, which are then degraded further into small acid-soluble oligonucleotides. The protein is Exodeoxyribonuclease 7 large subunit of Cereibacter sphaeroides (strain ATCC 17025 / ATH 2.4.3) (Rhodobacter sphaeroides).